An 83-amino-acid polypeptide reads, in one-letter code: Exodeoxyribonuclease 7 small subunit (83 aa).

The segment at 63-83 is disordered; sequence VQNDDGTTGTEPLADTGESGR.

The protein belongs to the XseB family. In terms of assembly, heterooligomer composed of large and small subunits.

It is found in the cytoplasm. The catalysed reaction is Exonucleolytic cleavage in either 5'- to 3'- or 3'- to 5'-direction to yield nucleoside 5'-phosphates.. Its function is as follows. Bidirectionally degrades single-stranded DNA into large acid-insoluble oligonucleotides, which are then degraded further into small acid-soluble oligonucleotides. The protein is Exodeoxyribonuclease 7 small subunit of Gluconobacter oxydans (strain 621H) (Gluconobacter suboxydans).